A 177-amino-acid chain; its full sequence is ATP synthase subunit delta (177 aa).

It belongs to the ATPase delta chain family. As to quaternary structure, F-type ATPases have 2 components, F(1) - the catalytic core - and F(0) - the membrane proton channel. F(1) has five subunits: alpha(3), beta(3), gamma(1), delta(1), epsilon(1). F(0) has three main subunits: a(1), b(2) and c(10-14). The alpha and beta chains form an alternating ring which encloses part of the gamma chain. F(1) is attached to F(0) by a central stalk formed by the gamma and epsilon chains, while a peripheral stalk is formed by the delta and b chains.

The protein localises to the cell inner membrane. F(1)F(0) ATP synthase produces ATP from ADP in the presence of a proton or sodium gradient. F-type ATPases consist of two structural domains, F(1) containing the extramembraneous catalytic core and F(0) containing the membrane proton channel, linked together by a central stalk and a peripheral stalk. During catalysis, ATP synthesis in the catalytic domain of F(1) is coupled via a rotary mechanism of the central stalk subunits to proton translocation. In terms of biological role, this protein is part of the stalk that links CF(0) to CF(1). It either transmits conformational changes from CF(0) to CF(1) or is implicated in proton conduction. The sequence is that of ATP synthase subunit delta from Neisseria meningitidis serogroup C (strain 053442).